A 2193-amino-acid polypeptide reads, in one-letter code: MGSQVSTQRSGSHENSNSASEGSTINYTTINYYKDAYAASAGRQDMSQDPKKFTDPVMDVIHEMAPPLKSPSAEACGYSDRVAQLTIGNSTITTQEAANIIIAYGEWPEYCKDADATAVDKPTRPDVSVNRFFTLDTKSWAKDSKGWYWKFPDVLTEVGVFGQNAQFHYLYRSGFCVHVQCNASKFHQGALLVAILPEYVLGTIAGGDGNENSHPPYVTTQPGQVGAVLTNPYVLDAGVPLSQLTVCPHQWINLRTNNCATIIVPYMNTVPFDSALNHCNFGLIVVPVVPLDFNAGATSEIPITVTIAPMCAEFAGLRQAIKQGIPTELKPGTNQFLTTDDGVSAPILPGFHPTPAIHIPGEVRNLLEICRVETILEVNNLQSNETTPMQRLCFPVSVQSKTGELCAVFRADPGRNGPWQSTILGQLCRYYTQWSGSLEVTFMFAGSFMATGKMLIAYTPPGGGVPADRLTAMLGTHVIWDFGLQSSVTLVIPWISNTHYRAHAKDGYFDYYTTGTITIWYQTNYVVPIGAPTTAYIVALAAAQDNFTMKLCKDTEDIEQSANIQGDGIADMIDQAVTSRVGRALTSLQVEPTAANTNASEHRLGTGLVPALQAAETGASSNAQDENLIETRCVLNHHSTQETTIGNFFSRAGLVSIITMPTTGTQNTDGYVNWDIDLMGYAQMRRKCELFTYMRFDAEFTFVAAKPNGELVPQLLQYMYVPPGAPKPTSRDSFAWQTATNPSIFVKLTDPPAQVSVPFMSPASAYQWFYDGYPTFGAHPQSNDADYGQCPNNMMGTFSIRTVGTEKSPHSITLRVYMRIKHVRAWIPRPLRNQPYLFKTNPNYKGNDIKCTSTSRDKITTLGKFGQQSGAIYVGNYRVVNRHLATHNDWANLVWEDSSRDLLVSSTTAQGCDTIARCDCQTGVYYCSSRRKHYPVSFSKPSLIFVEASEYYPARYQSHLMLAVGHSEPGDCGGILRCQHGVVGIVSTGGNGLVGFADVRDLLWLDEEAMEQGVSDYIKGLGDAFGTGFTDAVSREVEALKNHLIGSEGAVEKILKNLIKLISALVIVIRSDYDMVTLTATLALIGCHGSPWAWIKAKTASILGIPIAQKQSASWLKKFNDMANAAKGLEWISNKISKFIDWLKEKIIPAAKEKVEFLNNLKQLPLLENQISNLEQSAASQEDLEAMFGNVSYLAHFCRKFQPLYATEAKRVYALEKRMNNYMQFKSKHRIEPVCLIIRGSPGTGKSLATGIIARAIADKYHSSVYSLPPDPDHFDGYKQQVVTVMDDLCQNPDGKDMSLFCQMVSTVDFIPPMASLEEKGVSFTSKFVIASTNASNIIVPTVSDSDAIRRRFYMDCDIEVTDSYKTDLGRLDAGRAARLCSENNTANFKRCSPLVCGKAIQLRDRKSKVRYSVDTVVSELIREYNNRYAIGNTIEALFQGPPKFRPIRISLEEKPAPDAISDLLASVDSEEVRQYCRDQGWIIPETPTNVERHLNRAVLIMQSIATVVAVVSLVYVIYKLFAGFQGAYSGAPKQTLKKPILRTATVQGPSLDFALSLLRRNIRQVQTDQGHFTMLGVRDRLAVLPRHSQPGKTIWVEHKLINILDAVELVDEQGVNLELTLVTLDTNEKFRDITKFIPENISAASDATLVINTEHMPSMFVPVGDVVQYGFLNLSGKPTHRTMMYNFPTKAGQCGGVVTSVGKVIGIHIGGNGRQGFCAGLKRSYFASEQGEIQWVKPNKETGRLNINGPTRTKLEPSVFHDVFEGNKEPAVLHSRDPRLEVDFEQALFSKYVGNTLHEPDEYIKEAALHYANQLKQLDINTSQMSMEEACYGTENLEAIDLHTSAGYPYSALGIKKRDILDPTTRDVSKMKFYMDKYGLDLPYSTYVKDELRSIDKIKKGKSRLIEASSLNDSVYLRMAFGHLYETFHANPGTITGSAVGCNPDTFWSKLPILLPGSLFAFDYSGYDASLSPVWFRALELVLREVGYSEEAVSLIEGINHTHHVYRNKTYCVLGGMPSGCSGTSIFNSMINNIIIRTLLIKTFKGIDLDELNMVAYGDDVLASYPFPIDCLELARTGKEYGLTMTPADKSPCFNEVNWGNATFLKRGFLPDEQFPFLIHPTMPMKEIHESIRWTKDARNTQDHVRSLCLLAWHNGKQEYEKFVSTIRSVPVGKALAIPNYENLRRNWLELF.

Positions methionine 1–glycine 22 are disordered. A lipid anchor (N-myristoyl glycine; by host) is attached at glycine 2. The Cytoplasmic segment spans residues glycine 2–glutamine 1503. Amphipathic alpha-helix stretches follow at residues glycine 566–leucine 588 and glycine 568–leucine 588. Catalysis depends on for protease 2A activity residues histidine 883 and aspartate 901. 2 residues coordinate Zn(2+): cysteine 918 and cysteine 920. Residue cysteine 972 is the For protease 2A activity of the active site. Positions 978 and 980 each coordinate Zn(2+). The segment at serine 1112–leucine 1184 is membrane-binding. Residues serine 1112–threonine 1250 form an oligomerization region. The tract at residues serine 1133–serine 1137 is RNA-binding. Positions glutamate 1216 to alanine 1374 constitute an SF3 helicase domain. Residue glycine 1240 to serine 1247 participates in ATP binding. Cysteine 1381, cysteine 1392, and cysteine 1397 together coordinate Zn(2+). The C4-type; degenerate zinc-finger motif lies at cysteine 1381 to cysteine 1397. The segment at glutamate 1424–isoleucine 1431 is RNA-binding. The tract at residues isoleucine 1435–glutamine 1440 is oligomerization. Residues serine 1504–tyrosine 1519 lie within the membrane without spanning it. At lysine 1520–phenylalanine 2193 the chain is on the cytoplasmic side. Position 1529 is an O-(5'-phospho-RNA)-tyrosine (tyrosine 1529). Residues glycine 1549–phenylalanine 1727 enclose the Peptidase C3 domain. Active-site for protease 3C activity residues include histidine 1588, glutamate 1619, and cysteine 1695. Residues glycine 1958–leucine 2073 form the RdRp catalytic domain. Mg(2+) is bound by residues aspartate 1964 and aspartate 2060.

It belongs to the picornaviruses polyprotein family. Interacts with capsid protein VP1 and capsid protein VP3 to form heterotrimeric protomers. As to quaternary structure, interacts with capsid protein VP0, and capsid protein VP3 to form heterotrimeric protomers. Five protomers subsequently associate to form pentamers which serve as building blocks for the capsid. Interacts with capsid protein VP2, capsid protein VP3 and capsid protein VP4 following cleavage of capsid protein VP0. In terms of assembly, interacts with capsid protein VP1 and capsid protein VP3 in the mature capsid. Interacts with capsid protein VP0 and capsid protein VP1 to form heterotrimeric protomers. Five protomers subsequently associate to form pentamers which serve as building blocks for the capsid. Interacts with capsid protein VP4 in the mature capsid. Interacts with protein 2C; this interaction may be important for virion morphogenesis. As to quaternary structure, interacts with capsid protein VP1 and capsid protein VP3. In terms of assembly, homodimer. Homohexamer; forms a hexameric ring structure with 6-fold symmetry characteristic of AAA+ ATPases. Interacts (via N-terminus) with host RTN3 (via reticulon domain); this interaction is important for viral replication. Interacts with capsid protein VP3; this interaction may be important for virion morphogenesis. As to quaternary structure, interacts with protein 3CD. In terms of assembly, homodimer. Interacts with host GBF1. Interacts (via GOLD domain) with host ACBD3 (via GOLD domain); this interaction allows the formation of a viral protein 3A/ACBD3 heterotetramer with a 2:2 stoichiometry, which will stimulate the recruitment of host PI4KB in order to synthesize PI4P at the viral RNA replication sites. Interacts with RNA-directed RNA polymerase. As to quaternary structure, interacts with host IFIH1/MDA5; this interaction inhibits host IFIH1. In terms of assembly, interacts with protein 3AB and with RNA-directed RNA polymerase. Interacts with Viral protein genome-linked and with protein 3CD. The cofactor is Mg(2+). In terms of processing, specific enzymatic cleavages in vivo by the viral proteases yield processing intermediates and the mature proteins. Myristoylation is required for the formation of pentamers during virus assembly. Further assembly of 12 pentamers and a molecule of genomic RNA generates the provirion. Post-translationally, during virion maturation, immature virions are rendered infectious following cleavage of VP0 into VP4 and VP2. This maturation seems to be an autocatalytic event triggered by the presence of RNA in the capsid and it is followed by a conformational change infectious virion. In terms of processing, myristoylation is required during RNA encapsidation and formation of the mature virus particle. VPg is uridylylated by the polymerase into VPg-pUpU. This acts as a nucleotide-peptide primer for the genomic RNA replication.

It localises to the virion. The protein localises to the host cytoplasm. Its subcellular location is the host cytoplasmic vesicle membrane. It is found in the host nucleus. It carries out the reaction a ribonucleoside 5'-triphosphate + H2O = a ribonucleoside 5'-diphosphate + phosphate + H(+). The enzyme catalyses Selective cleavage of Tyr-|-Gly bond in the picornavirus polyprotein.. It catalyses the reaction RNA(n) + a ribonucleoside 5'-triphosphate = RNA(n+1) + diphosphate. The catalysed reaction is Selective cleavage of Gln-|-Gly bond in the poliovirus polyprotein. In other picornavirus reactions Glu may be substituted for Gln, and Ser or Thr for Gly.. With respect to regulation, replication or transcription is subject to high level of random mutations by the nucleotide analog ribavirin. In terms of biological role, forms an icosahedral capsid of pseudo T=3 symmetry with capsid proteins VP2 and VP3. The capsid is 300 Angstroms in diameter, composed of 60 copies of each capsid protein and enclosing the viral positive strand RNA genome. Capsid protein VP1 mainly forms the vertices of the capsid. Capsid protein VP1 interacts with host cell receptor to provide virion attachment to target host cells. This attachment induces virion internalization. After binding to its receptor, the capsid undergoes conformational changes. Capsid protein VP1 N-terminus (that contains an amphipathic alpha-helix) and capsid protein VP4 are externalized. Together, they shape a pore in the host membrane through which viral genome is translocated to host cell cytoplasm. Its function is as follows. Forms an icosahedral capsid of pseudo T=3 symmetry with capsid proteins VP2 and VP3. The capsid is 300 Angstroms in diameter, composed of 60 copies of each capsid protein and enclosing the viral positive strand RNA genome. Functionally, lies on the inner surface of the capsid shell. After binding to the host receptor, the capsid undergoes conformational changes. Capsid protein VP4 is released, Capsid protein VP1 N-terminus is externalized, and together, they shape a pore in the host membrane through which the viral genome is translocated into the host cell cytoplasm. Component of immature procapsids, which is cleaved into capsid proteins VP4 and VP2 after maturation. Allows the capsid to remain inactive before the maturation step. In terms of biological role, cysteine protease that cleaves viral polyprotein and specific host proteins. It is responsible for the autocatalytic cleavage between the P1 and P2 regions, which is the first cleavage occurring in the polyprotein. Also cleaves the host translation initiation factor EIF4G1, in order to shut down the capped cellular mRNA translation. Inhibits the host nucleus-cytoplasm protein and RNA trafficking by cleaving host members of the nuclear pores. Counteracts stress granule formation probably by antagonizing its assembly or promoting its dissassembly. Cleaves and inhibits host IFIH1/MDA5, thereby inhibiting the type-I IFN production and the establishment of the antiviral state. Cleaves and inhibits host MAVS, thereby inhibiting the type-I IFN production and the establishment of the antiviral state. Its function is as follows. Plays an essential role in the virus replication cycle by acting as a viroporin. Creates a pore in the host endoplasmic reticulum and as a consequence releases Ca2+ in the cytoplasm of infected cell. In turn, high levels of cytoplasmic calcium may trigger membrane trafficking and transport of viral ER-associated proteins to viroplasms, sites of viral genome replication. Functionally, induces and associates with structural rearrangements of intracellular membranes. Displays RNA-binding, nucleotide binding and NTPase activities. May play a role in virion morphogenesis and viral RNA encapsidation by interacting with the capsid protein VP3. Localizes the viral replication complex to the surface of membranous vesicles. Together with protein 3CD binds the Cis-Active RNA Element (CRE) which is involved in RNA synthesis initiation. Acts as a cofactor to stimulate the activity of 3D polymerase, maybe through a nucleid acid chaperone activity. In terms of biological role, localizes the viral replication complex to the surface of membranous vesicles. It inhibits host cell endoplasmic reticulum-to-Golgi apparatus transport and causes the disassembly of the Golgi complex, possibly through GBF1 interaction. This would result in depletion of MHC, trail receptors and IFN receptors at the host cell surface. Plays an essential role in viral RNA replication by recruiting ACBD3 and PI4KB at the viral replication sites, thereby allowing the formation of the rearranged membranous structures where viral replication takes place. Its function is as follows. Acts as a primer for viral RNA replication and remains covalently bound to viral genomic RNA. VPg is uridylylated prior to priming replication into VPg-pUpU. The oriI viral genomic sequence may act as a template for this. The VPg-pUpU is then used as primer on the genomic RNA poly(A) by the RNA-dependent RNA polymerase to replicate the viral genome. During genome replication, the VPg-RNA linkage is removed by the host TDP2, thereby accelerating replication. During the late stage of the replication cycle, host TDP2 is excluded from sites of viral RNA synthesis and encapsidation, allowing for the generation of progeny virions. Functionally, involved in the viral replication complex and viral polypeptide maturation. It exhibits protease activity with a specificity and catalytic efficiency that is different from protease 3C. Protein 3CD lacks polymerase activity. Protein 3CD binds to the 5'UTR of the viral genome. Major viral protease that mediates proteolytic processing of the polyprotein. Cleaves host EIF5B, contributing to host translation shutoff. Also cleaves host PABPC1, contributing to host translation shutoff. Binds and inhibits host IFIH1/MDA5, thereby inhibiting the type-I IFN production and the establishment of the antiviral state. Cleaves host MAP3K7/TAK1, resulting in inhibition of TRAF6-triggered NF-kappa-B induction. Cleaves host NLRP1, triggers host N-glycine-mediated degradation of the autoinhibitory NLRP1 N-terminal fragment. In terms of biological role, replicates the viral genomic RNA on the surface of intracellular membranes. May form linear arrays of subunits that propagate along a strong head-to-tail interaction called interface-I. Covalently attaches UMP to a tyrosine of VPg, which is used to prime RNA synthesis. The positive stranded RNA genome is first replicated at virus induced membranous vesicles, creating a dsRNA genomic replication form. This dsRNA is then used as template to synthesize positive stranded RNA genomes. ss(+)RNA genomes are either translated, replicated or encapsidated. In Homo sapiens (Human), this protein is Genome polyprotein.